The chain runs to 224 residues: Urease accessory protein UreF (224 aa).

Belongs to the UreF family. UreD, UreF and UreG form a complex that acts as a GTP-hydrolysis-dependent molecular chaperone, activating the urease apoprotein by helping to assemble the nickel containing metallocenter of UreC. The UreE protein probably delivers the nickel.

The protein localises to the cytoplasm. Its function is as follows. Required for maturation of urease via the functional incorporation of the urease nickel metallocenter. The polypeptide is Urease accessory protein UreF (Enterobacter sp. (strain 638)).